The sequence spans 303 residues: Putative AraC-like transcription regulator (303 aa).

The region spanning 202-300 is the HTH araC/xylS-type domain; sequence ASALTFLHRD…GMNPGDYRKH (99 aa). 2 DNA-binding regions (H-T-H motif) span residues 219 to 240 and 267 to 290; these read AELA…KATV and LAAI…KRVL.

This is Putative AraC-like transcription regulator from Streptomyces antibioticus.